Here is a 257-residue protein sequence, read N- to C-terminus: Trans-aconitate 2-methyltransferase (257 aa).

This sequence belongs to the methyltransferase superfamily. Tam family.

The protein resides in the cytoplasm. It carries out the reaction trans-aconitate + S-adenosyl-L-methionine = (E)-3-(methoxycarbonyl)pent-2-enedioate + S-adenosyl-L-homocysteine. Its function is as follows. Catalyzes the S-adenosylmethionine monomethyl esterification of trans-aconitate. This Sinorhizobium fredii (strain NBRC 101917 / NGR234) protein is Trans-aconitate 2-methyltransferase.